The following is a 534-amino-acid chain: Protein TIC 62, chloroplastic (534 aa).

A chloroplast-targeting transit peptide spans 1 to 64 (MPMEVFSLTS…SSSSSSSSIR (64 aa)). A disordered region spans residues 50 to 83 (NNRIRSSSSSSSSIRAQASGSTKSSTAEGIPEKT). The segment covering 63-76 (IRAQASGSTKSSTA) has biased composition (polar residues). NADP(+) is bound at residue 91-120 (VFVAGATGKVGSRTVRELIKLGFKVRAGVR). The segment at 334–534 (PSQRPYIPSP…ASPSPSFRKS (201 aa)) is disordered. Polar residues predominate over residues 350 to 360 (DTATVSNTGPS). Copy 1 of the repeat occupies 387-408 (PLSPYTAYDDLKPPSSPSPTKP). The tract at residues 387 to 532 (PLSPYTAYDD…PPASPSPSFR (146 aa)) is 3 X 22 AA approximate repeats. Residues 421–432 (PTPISSDTPSSI) show a composition bias toward low complexity. Residues 450-471 (SLSPYAAYPDLKPPSSPSPSVP) form repeat 2. Over residues 460-469 (LKPPSSPSPS) the composition is skewed to pro residues. Residues 495-509 (DTPKNEEQHLHEPKS) show a composition bias toward basic and acidic residues. Copy 3 of the repeat occupies 511 to 532 (PLSPYAMYEDLKPPASPSPSFR).

In terms of assembly, part of the Tic complex. Interacts with TIC40, TIC110 and TIC55. Interacts (via C-terminus) with PETH/FNR.

The protein resides in the plastid. It is found in the chloroplast inner membrane. It localises to the chloroplast stroma. Its function is as follows. Involved in protein precursor import into chloroplasts. Part of the redox regulon consisting of TIC32, TIC 55 and TIC62. Has a NADPH-dependent dehydrogenase activity, but only after preincubation with lipids. In Pisum sativum (Garden pea), this protein is Protein TIC 62, chloroplastic (TIC62).